The chain runs to 68 residues: Alpha-conotoxin-like Ca1.2 (68 aa).

Positions 1–21 are cleaved as a signal peptide; sequence MGMRMMFTVFLLVVLATTVVS. Positions 22–48 are excised as a propeptide; it reads FTSDRASEGRNAAAKDKASDLVALTVR. 2 disulfides stabilise this stretch: Cys-50/Cys-56 and Cys-51/Cys-64. The tract at residues 52-54 is lacks the Ser-Xaa-Pro motif that is crucial for potent interaction with nAChR; it reads AIR. Tyr-63 is modified (sulfotyrosine). Residue Cys-64 is modified to Cysteine amide. Positions 65–68 are excised as a propeptide; sequence GGIY.

This sequence belongs to the conotoxin A superfamily. Expressed by the venom duct.

The protein localises to the secreted. Alpha-conotoxins act on postsynaptic membranes, they bind to the nicotinic acetylcholine receptors (nAChR) and thus inhibit them. Has possibly a distinct nAChR binding mode from other alpha-conotoxins, due to a different three residue motif (lacks the Ser-Xaa-Pro motif). The chain is Alpha-conotoxin-like Ca1.2 from Conus caracteristicus (Characteristic cone).